The chain runs to 670 residues: Solute carrier organic anion transporter family member 1A5 (670 aa).

Residues Met-1 to Lys-20 lie on the Cytoplasmic side of the membrane. A helical transmembrane segment spans residues Met-21–Met-40. Over Asn-41 to Gly-59 the chain is Extracellular. A helical membrane pass occupies residues Leu-60–Gly-80. Residues Thr-81–Pro-86 lie on the Cytoplasmic side of the membrane. Residues Ile-87 to Gly-111 form a helical membrane-spanning segment. The Extracellular portion of the chain corresponds to Arg-112–Ser-155. 2 N-linked (GlcNAc...) asparagine glycosylation sites follow: Asn-124 and Asn-135. A helical membrane pass occupies residues Leu-156 to Glu-184. Residues Asp-185–Lys-203 are Cytoplasmic-facing. The helical transmembrane segment at Met-204–Thr-224 threads the bilayer. The Extracellular segment spans residues Gly-225–Val-242. Residues Gly-243 to Pro-267 form a helical membrane-spanning segment. Over Lys-268 to Ser-311 the chain is Cytoplasmic. Residues Leu-312–Ile-333 form a helical membrane-spanning segment. The Extracellular portion of the chain corresponds to Asn-334–Glu-353. The helical transmembrane segment at Val-354 to Met-377 threads the bilayer. Residues Lys-378–Arg-381 lie on the Cytoplasmic side of the membrane. Residues Ile-382–His-405 form a helical membrane-spanning segment. At Phe-406–Phe-513 the chain is on the extracellular side. The Kazal-like domain maps to Asn-433–Gln-488. Disulfide bonds link Cys-439-Cys-469, Cys-445-Cys-465, and Cys-454-Cys-486. N-linked (GlcNAc...) asparagine glycans are attached at residues Asn-483 and Asn-492. Residues Leu-514–Leu-536 form a helical membrane-spanning segment. At Arg-537 to Ser-545 the chain is on the cytoplasmic side. A helical membrane pass occupies residues Leu-546–Ile-571. Topologically, residues Asp-572–Pro-605 are extracellular. The helical transmembrane segment at Ala-606–Met-623 threads the bilayer. Topologically, residues Arg-624–Leu-670 are cytoplasmic.

It belongs to the organo anion transporter (TC 2.A.60) family. In terms of tissue distribution, expressed in brain, choroid plexus and lung, but not in liver or kidney.

Its subcellular location is the cell membrane. The protein resides in the basal cell membrane. The enzyme catalyses taurocholate(out) = taurocholate(in). It catalyses the reaction glycocholate(out) = glycocholate(in). It carries out the reaction taurochenodeoxycholate(out) = taurochenodeoxycholate(in). The catalysed reaction is tauroursodeoxycholate(out) = tauroursodeoxycholate(in). The enzyme catalyses 3,3',5'-triiodo-L-thyronine(out) = 3,3',5'-triiodo-L-thyronine(in). It catalyses the reaction L-thyroxine(out) = L-thyroxine(in). It carries out the reaction taurodeoxycholate(out) = taurodeoxycholate(in). The catalysed reaction is glycodeoxycholate(out) = glycodeoxycholate(in). The enzyme catalyses glycochenodeoxycholate(out) = glycochenodeoxycholate(in). It catalyses the reaction glycoursodeoxycholate(out) = glycoursodeoxycholate(in). It carries out the reaction estrone 3-sulfate(out) = estrone 3-sulfate(in). The catalysed reaction is prostaglandin E2(out) = prostaglandin E2(in). The enzyme catalyses substance P(out) = substance P(in). Its function is as follows. Na(+)-independent transporter that mediates the cellular uptake of a broad range of organic anions such as the endogenous bile salts cholate and deoxycholate, either in their unconjugated or conjugated forms (taurocholate and glycocholate), estrone 3-sulfate and prostaglandin E2, at the plasma membrane. Responsible for intestinal absorption of bile acids. Capable of thyroid hormone transport (both T3 or 3,3',5'-triiodo-L-thyronine, and T4 or L-tyroxine). Plays roles in blood-brain and -cerebrospinal fluid barrier transport of organic anions and signal mediators, and in hormone uptake by neural cells. May also play a role in the reuptake of neuropeptides such as substance P/TAC1 and vasoactive intestinal peptide/VIP released from retinal neurons. Shows a pH-sensitive substrate specificity which may be ascribed to the protonation state of the binding site and leads to a stimulation of substrate transport in an acidic microenvironment. Hydrogencarbonate/HCO3(-) acts as the probable counteranion that exchanges for organic anions. May contribute to regulate the transport of organic compounds in testis across the blood-testis-barrier. In Mus musculus (Mouse), this protein is Solute carrier organic anion transporter family member 1A5 (Slco1a5).